Reading from the N-terminus, the 400-residue chain is Phosphoglycerate kinase (400 aa).

Residues 23–25, Arg-38, 61–64, Arg-120, and Arg-153 contribute to the substrate site; these read DLN and HFGR. Residues Lys-203, Glu-325, and 355 to 358 each bind ATP; that span reads GGDT.

The protein belongs to the phosphoglycerate kinase family. Monomer.

The protein resides in the cytoplasm. It carries out the reaction (2R)-3-phosphoglycerate + ATP = (2R)-3-phospho-glyceroyl phosphate + ADP. It participates in carbohydrate degradation; glycolysis; pyruvate from D-glyceraldehyde 3-phosphate: step 2/5. The chain is Phosphoglycerate kinase from Methylorubrum extorquens (strain PA1) (Methylobacterium extorquens).